A 37-amino-acid chain; its full sequence is Cytochrome b6-f complex subunit 5 (37 aa).

Residues 5-25 (LLSGIILGLIPVTLSGLLVAA) traverse the membrane as a helical segment.

This sequence belongs to the PetG family. The 4 large subunits of the cytochrome b6-f complex are cytochrome b6, subunit IV (17 kDa polypeptide, PetD), cytochrome f and the Rieske protein, while the 4 small subunits are PetG, PetL, PetM and PetN. The complex functions as a dimer.

It is found in the plastid. It localises to the chloroplast thylakoid membrane. Component of the cytochrome b6-f complex, which mediates electron transfer between photosystem II (PSII) and photosystem I (PSI), cyclic electron flow around PSI, and state transitions. PetG is required for either the stability or assembly of the cytochrome b6-f complex. This chain is Cytochrome b6-f complex subunit 5, found in Porphyra purpurea (Red seaweed).